The primary structure comprises 282 residues: Shikimate dehydrogenase (NADP(+)) (282 aa).

Shikimate is bound by residues 15-17 and threonine 62; that span reads SKS. The active-site Proton acceptor is the lysine 66. The shikimate site is built by asparagine 87 and aspartate 103. Residues 127 to 131, 151 to 156, and methionine 220 contribute to the NADP(+) site; these read GAGGA and NRTHTK. Residue tyrosine 222 participates in shikimate binding. Position 244 (glycine 244) interacts with NADP(+).

Belongs to the shikimate dehydrogenase family. Homodimer.

The catalysed reaction is shikimate + NADP(+) = 3-dehydroshikimate + NADPH + H(+). The protein operates within metabolic intermediate biosynthesis; chorismate biosynthesis; chorismate from D-erythrose 4-phosphate and phosphoenolpyruvate: step 4/7. Involved in the biosynthesis of the chorismate, which leads to the biosynthesis of aromatic amino acids. Catalyzes the reversible NADPH linked reduction of 3-dehydroshikimate (DHSA) to yield shikimate (SA). The sequence is that of Shikimate dehydrogenase (NADP(+)) from Shewanella baltica (strain OS185).